The primary structure comprises 920 residues: Coatomer subunit beta'-1 (920 aa).

8 WD repeats span residues 13-52, 55-94, 97-136, 140-180, 183-224, 227-266, 350-392, and 460-500; these read QRSE…MVKS, VTEL…KIKV, AHAD…LCTQ, GHSH…PNFT, AHLK…CVQT, GHTH…LENT, TCDL…GSAL, and RIDV…SYFD. The interval 850–920 is disordered; that stretch reads LEQGDVLDEV…EQWVLTPPQE (71 aa). Positions 854 to 875 are enriched in acidic residues; that stretch reads DVLDEVGEEGEDGEEEEEEDRQ.

This sequence belongs to the WD repeat COPB2 family. As to quaternary structure, oligomeric complex that consists of at least the alpha, beta, beta', gamma, delta, epsilon and zeta subunits.

Its subcellular location is the cytoplasm. It is found in the golgi apparatus membrane. The protein localises to the cytoplasmic vesicle. The protein resides in the COPI-coated vesicle membrane. The coatomer is a cytosolic protein complex that binds to dilysine motifs and reversibly associates with Golgi non-clathrin-coated vesicles, which further mediate biosynthetic protein transport from the ER, via the Golgi up to the trans Golgi network. Coatomer complex is required for budding from Golgi membranes, and is essential for the retrograde Golgi-to-ER transport of dilysine-tagged proteins. The protein is Coatomer subunit beta'-1 of Arabidopsis thaliana (Mouse-ear cress).